The following is a 315-amino-acid chain: Initiation factor TFIIB homolog (315 aa).

This sequence belongs to the asfivirus C315R family.

Putative initation factor. The protein is Initiation factor TFIIB homolog of African swine fever virus (strain Badajoz 1971 Vero-adapted) (Ba71V).